The sequence spans 167 residues: Transmembrane protein 229B (167 aa).

The Cytoplasmic segment spans residues methionine 1–tyrosine 14. The chain crosses the membrane as a helical span at residues leucine 15 to valine 35. Over asparagine 36–lysine 40 the chain is Extracellular. A helical membrane pass occupies residues phenylalanine 41 to glutamate 61. The Cytoplasmic portion of the chain corresponds to arginine 62–leucine 73. A helical transmembrane segment spans residues leucine 74–isoleucine 94. Residues leucine 95–aspartate 109 are Extracellular-facing. A helical membrane pass occupies residues phenylalanine 110 to isoleucine 130. Residues methionine 131–aspartate 167 lie on the Cytoplasmic side of the membrane.

Belongs to the TMEM229 family.

It localises to the membrane. The sequence is that of Transmembrane protein 229B (TMEM229B) from Homo sapiens (Human).